The chain runs to 309 residues: Methionyl-tRNA formyltransferase (309 aa).

S110–P113 is a (6S)-5,6,7,8-tetrahydrofolate binding site. A disordered region spans residues K289–K309. Residues R298–K309 show a composition bias toward basic and acidic residues.

It belongs to the Fmt family.

It carries out the reaction L-methionyl-tRNA(fMet) + (6R)-10-formyltetrahydrofolate = N-formyl-L-methionyl-tRNA(fMet) + (6S)-5,6,7,8-tetrahydrofolate + H(+). Attaches a formyl group to the free amino group of methionyl-tRNA(fMet). The formyl group appears to play a dual role in the initiator identity of N-formylmethionyl-tRNA by promoting its recognition by IF2 and preventing the misappropriation of this tRNA by the elongation apparatus. The protein is Methionyl-tRNA formyltransferase of Saccharopolyspora erythraea (strain ATCC 11635 / DSM 40517 / JCM 4748 / NBRC 13426 / NCIMB 8594 / NRRL 2338).